A 450-amino-acid polypeptide reads, in one-letter code: Tubulin alpha-3 chain (450 aa).

Q11 lines the GTP pocket. N6-acetyllysine is present on K40. Residues E71, S140, G144, T145, T179, N206, and N228 each contribute to the GTP site. E71 serves as a coordination point for Mg(2+). The active site involves E254.

This sequence belongs to the tubulin family. As to quaternary structure, dimer of alpha and beta chains. A typical microtubule is a hollow water-filled tube with an outer diameter of 25 nm and an inner diameter of 15 nM. Alpha-beta heterodimers associate head-to-tail to form protofilaments running lengthwise along the microtubule wall with the beta-tubulin subunit facing the microtubule plus end conferring a structural polarity. Microtubules usually have 13 protofilaments but different protofilament numbers can be found in some organisms and specialized cells. Mg(2+) is required as a cofactor. In terms of processing, undergoes a tyrosination/detyrosination cycle, the cyclic removal and re-addition of a C-terminal tyrosine residue by the enzymes tubulin tyrosine carboxypeptidase (TTCP) and tubulin tyrosine ligase (TTL), respectively. Acetylation of alpha chains at Lys-40 stabilizes microtubules and affects affinity and processivity of microtubule motors. This modification has a role in multiple cellular functions, ranging from cell motility, cell cycle progression or cell differentiation to intracellular trafficking and signaling. During the early stages of oogenesis lky/Alpha-tubulin N-acetyltransferase 2 is the main acetyltransferase responsible for Lys-40 acetylation in germline cells while Atat/alpha-tubulin N-acetyltransferase 1 is the main acetyltransferase responsible for Lys-40 acetylation in somatic cells.

It is found in the cytoplasm. The protein localises to the cytoskeleton. It carries out the reaction GTP + H2O = GDP + phosphate + H(+). In terms of biological role, tubulin is the major constituent of microtubules, a cylinder consisting of laterally associated linear protofilaments composed of alpha- and beta-tubulin heterodimers. Microtubules grow by the addition of GTP-tubulin dimers to the microtubule end, where a stabilizing cap forms. Below the cap, tubulin dimers are in GDP-bound state, owing to GTPase activity of alpha-tubulin. The sequence is that of Tubulin alpha-3 chain (alphaTub84D) from Drosophila melanogaster (Fruit fly).